Reading from the N-terminus, the 247-residue chain is V-type proton ATPase subunit D (247 aa).

The protein belongs to the V-ATPase D subunit family. As to quaternary structure, V-ATPase is a heteromultimeric enzyme made up of two complexes: the ATP-hydrolytic V1 complex and the proton translocation V0 complex. The V1 complex consists of three catalytic AB heterodimers that form a heterohexamer, three peripheral stalks each consisting of EG heterodimers, one central rotor including subunits D and F, and the regulatory subunits C and H. The proton translocation complex V0 consists of the proton transport subunit a, a ring of proteolipid subunits c9c'', rotary subunit d, subunits e and f, and the accessory subunits ATP6AP1/Ac45 and ATP6AP2/PRR. Interacts with SNX10. As to expression, expressed in brain (at protein level). Present in tissues active in secretion. Amounts elevated in brain, kidney and testis.

Its subcellular location is the membrane. The protein localises to the cytoplasmic vesicle. It localises to the clathrin-coated vesicle membrane. It is found in the cytoplasm. The protein resides in the cytoskeleton. Its subcellular location is the microtubule organizing center. The protein localises to the centrosome. It localises to the cell projection. It is found in the cilium. Functionally, subunit of the V1 complex of vacuolar(H+)-ATPase (V-ATPase), a multisubunit enzyme composed of a peripheral complex (V1) that hydrolyzes ATP and a membrane integral complex (V0) that translocates protons. V-ATPase is responsible for acidifying and maintaining the pH of intracellular compartments and in some cell types, is targeted to the plasma membrane, where it is responsible for acidifying the extracellular environment. May play a role in cilium biogenesis through regulation of the transport and the localization of proteins to the cilium. This is V-type proton ATPase subunit D (ATP6V1D) from Bos taurus (Bovine).